We begin with the raw amino-acid sequence, 57 residues long: UPF0391 membrane protein XOO1885 (57 aa).

Transmembrane regions (helical) follow at residues 4 to 24 (WAII…GGMA) and 33 to 53 (FLFW…MTIA).

This sequence belongs to the UPF0391 family.

Its subcellular location is the cell membrane. The polypeptide is UPF0391 membrane protein XOO1885 (Xanthomonas oryzae pv. oryzae (strain KACC10331 / KXO85)).